Here is a 559-residue protein sequence, read N- to C-terminus: MYYSSLAEAFERLERISSRKAKISLIAQFLRQCPEDVVDTVALFLANQVFPGWDPRDLGIGSKLMRKVIATATGSTDSEVTELFKRLGDLGLTAEELLKRRKTSTLLDSRPLMVGEVRETFEKIAEVEGEGAVKRKMRLMMGLLARAKPKEARYLVRQALSELRTGVRESTVEEAIAQAFGVSRKLVERAHMLSNDLGLVAKVAMTKGEEGLREIDLRPMRPIKPMLAQAARNVKEALAEVGGKGAVEIKLDGARVQVHSDGEEVRVYTRRIEDVTHALPDIVEAVKDCVDADEFILEGEAVAINPETGKPRPFQELLHRIKRKYDIEEVRKEIPVELHLFDCLYVDGESLVDTPFRERRRRLEEIVREREGEVMLVEQVITDDPKEAAEMFHRALEMGHEGVMVKDLDANYTPGVRGKKMLKVKPVLETLDCVVIGGIWGKGKRKGLIGSYLLAVWDENKENLLEVGKVGTGMDDETLERLTKMFEDLIVEESGREVRFKPEVVFEVEFEDIQKSPKYSSGFALRFPRLVRVRDDLGPEDADTIEKVRRIYEEVLQKH.

Residue glutamate 248 participates in ATP binding. The N6-AMP-lysine intermediate role is filled by lysine 250. The ATP site is built by arginine 255, arginine 270, glutamate 300, phenylalanine 341, arginine 417, and lysine 423.

This sequence belongs to the ATP-dependent DNA ligase family. Mg(2+) serves as cofactor.

It catalyses the reaction ATP + (deoxyribonucleotide)n-3'-hydroxyl + 5'-phospho-(deoxyribonucleotide)m = (deoxyribonucleotide)n+m + AMP + diphosphate.. Functionally, DNA ligase that seals nicks in double-stranded DNA during DNA replication, DNA recombination and DNA repair. The sequence is that of DNA ligase from Methanopyrus kandleri (strain AV19 / DSM 6324 / JCM 9639 / NBRC 100938).